We begin with the raw amino-acid sequence, 694 residues long: Probable metal-nicotianamine transporter YSL8 (694 aa).

Transmembrane regions (helical) follow at residues 38-58 (ITVR…FIVM), 62-82 (LTSG…FFLM), 110-130 (CVIS…ILGM), 154-174 (LGRL…SIVP), 215-235 (ILFK…FYAA), 265-285 (VGVG…GSVV), 319-339 (VFIS…SIVL), 393-413 (IAAA…PHIF), 421-441 (VVWA…GTGL), 467-487 (GGVV…STAS), 506-526 (MFVS…MVFW), 567-587 (LRFC…KEVA), 608-628 (FFLG…LFLW), and 643-663 (VASG…ILSL).

This sequence belongs to the YSL (TC 2.A.67.2) family. As to expression, expressed in root epidermis and exoderm.

It is found in the membrane. In terms of biological role, may be involved in the transport of nicotianamine-chelated metals. The sequence is that of Probable metal-nicotianamine transporter YSL8 (YSL8) from Oryza sativa subsp. japonica (Rice).